Reading from the N-terminus, the 205-residue chain is Large ribosomal subunit protein uL4 (205 aa).

Belongs to the universal ribosomal protein uL4 family. Part of the 50S ribosomal subunit.

Functionally, one of the primary rRNA binding proteins, this protein initially binds near the 5'-end of the 23S rRNA. It is important during the early stages of 50S assembly. It makes multiple contacts with different domains of the 23S rRNA in the assembled 50S subunit and ribosome. Forms part of the polypeptide exit tunnel. The sequence is that of Large ribosomal subunit protein uL4 from Ruegeria sp. (strain TM1040) (Silicibacter sp.).